The following is a 552-amino-acid chain: Membrane protein insertase YidC (552 aa).

The chain crosses the membrane as a helical span at residues 3 to 23 (TKRLILFVIFSFSILMLWDSW). Residues 29–65 (PPAASQTQTTAQSVEDGSVPQAAKSSASAANQASVPA) are disordered. Transmembrane regions (helical) follow at residues 359–379 (WGVA…PLSA), 429–449 (LPIL…LGSV), 463–483 (LSAV…MIIQ), and 503–523 (PIVF…YWLV).

Belongs to the OXA1/ALB3/YidC family. Type 1 subfamily. In terms of assembly, interacts with the Sec translocase complex via SecD. Specifically interacts with transmembrane segments of nascent integral membrane proteins during membrane integration.

It is found in the cell inner membrane. Functionally, required for the insertion and/or proper folding and/or complex formation of integral membrane proteins into the membrane. Involved in integration of membrane proteins that insert both dependently and independently of the Sec translocase complex, as well as at least some lipoproteins. Aids folding of multispanning membrane proteins. This is Membrane protein insertase YidC from Methylobacillus flagellatus (strain ATCC 51484 / DSM 6875 / VKM B-1610 / KT).